A 153-amino-acid polypeptide reads, in one-letter code: ORM1-like protein 3 (153 aa).

Positions 1–17 (MNVGTAHSEVNPNTRVM) are important for ceramide level-sensing. Residues 1-21 (MNVGTAHSEVNPNTRVMNSRG) are Cytoplasmic-facing. 2 helical membrane passes run 22-42 (IWLSYVLAIGLLHVVLLSIPF) and 43-63 (VSVPVVWTLTNLIHNLGMYIF). Topologically, residues 64 to 94 (LHTVKGTPFETPDQGKARLLTHWEQMDYGVQ) are cytoplasmic. The helical transmembrane segment at 95–117 (FTASRKFLTITPIVLYFLTSFYT) threads the bilayer. The Extracellular portion of the chain corresponds to 118–121 (KYDQ). Residues 122–142 (VHFILNTVSLMSVLIPKLPQL) form a helical membrane-spanning segment. Pro-137 is subject to Hydroxyproline. Over 143–153 (HGVRIFGINKY) the chain is Cytoplasmic.

The protein belongs to the ORM family. As to quaternary structure, ceramide-sensitive subunit of the serine palmitoyltransferase (SPT) complex, which is also composed of SPTLC1, SPTLC2/3 and SPTSSA/B. When hydroxylated at Pro-137, ubiquitinated via 'Lys-48'-linkage, leading to proteasomal degradation. In endothelial cells, ORMDL3 proteasomal degradation is controlled by the sphingosine 1-phosphate receptor signaling pathway.

It localises to the endoplasmic reticulum membrane. Functionally, plays an essential role in the homeostatic regulation of sphingolipid de novo biosynthesis by modulating the activity of the serine palmitoyltransferase (SPT) in response to ceramide levels. When complexed to SPT, the binding of ceramides to its N-terminus stabilizes a conformation that block SPT substrate entry, hence preventing SPT catalytic activity. Through this mechanism, maintains ceramide levels at sufficient concentrations for the production of complex sphingolipids, but which prevents the accumulation of ceramides to levels that trigger apoptosis. This chain is ORM1-like protein 3 (Ormdl3), found in Rattus norvegicus (Rat).